An 88-amino-acid chain; its full sequence is Small ribosomal subunit protein uS17 (88 aa).

It belongs to the universal ribosomal protein uS17 family. In terms of assembly, part of the 30S ribosomal subunit.

Its function is as follows. One of the primary rRNA binding proteins, it binds specifically to the 5'-end of 16S ribosomal RNA. This Oenococcus oeni (strain ATCC BAA-331 / PSU-1) protein is Small ribosomal subunit protein uS17.